A 376-amino-acid polypeptide reads, in one-letter code: 4-hydroxy-3-methylbut-2-enyl diphosphate reductase (376 aa).

Position 19 (C19) interacts with [4Fe-4S] cluster. Positions 48 and 99 each coordinate (2E)-4-hydroxy-3-methylbut-2-enyl diphosphate. 2 residues coordinate dimethylallyl diphosphate: H48 and H99. The isopentenyl diphosphate site is built by H48 and H99. C121 provides a ligand contact to [4Fe-4S] cluster. H149 lines the (2E)-4-hydroxy-3-methylbut-2-enyl diphosphate pocket. H149 contributes to the dimethylallyl diphosphate binding site. Residue H149 participates in isopentenyl diphosphate binding. E151 functions as the Proton donor in the catalytic mechanism. Position 208 (T208) interacts with (2E)-4-hydroxy-3-methylbut-2-enyl diphosphate. Position 236 (C236) interacts with [4Fe-4S] cluster. (2E)-4-hydroxy-3-methylbut-2-enyl diphosphate contacts are provided by S264, N266, and S307. S264, N266, and S307 together coordinate dimethylallyl diphosphate. Isopentenyl diphosphate is bound by residues S264, N266, and S307.

It belongs to the IspH family. Requires [4Fe-4S] cluster as cofactor.

It catalyses the reaction isopentenyl diphosphate + 2 oxidized [2Fe-2S]-[ferredoxin] + H2O = (2E)-4-hydroxy-3-methylbut-2-enyl diphosphate + 2 reduced [2Fe-2S]-[ferredoxin] + 2 H(+). It carries out the reaction dimethylallyl diphosphate + 2 oxidized [2Fe-2S]-[ferredoxin] + H2O = (2E)-4-hydroxy-3-methylbut-2-enyl diphosphate + 2 reduced [2Fe-2S]-[ferredoxin] + 2 H(+). It participates in isoprenoid biosynthesis; dimethylallyl diphosphate biosynthesis; dimethylallyl diphosphate from (2E)-4-hydroxy-3-methylbutenyl diphosphate: step 1/1. Its pathway is isoprenoid biosynthesis; isopentenyl diphosphate biosynthesis via DXP pathway; isopentenyl diphosphate from 1-deoxy-D-xylulose 5-phosphate: step 6/6. Functionally, catalyzes the conversion of 1-hydroxy-2-methyl-2-(E)-butenyl 4-diphosphate (HMBPP) into a mixture of isopentenyl diphosphate (IPP) and dimethylallyl diphosphate (DMAPP). Acts in the terminal step of the DOXP/MEP pathway for isoprenoid precursor biosynthesis. This Treponema pallidum (strain Nichols) protein is 4-hydroxy-3-methylbut-2-enyl diphosphate reductase.